Consider the following 1250-residue polypeptide: Myosin-1 (1250 aa).

A disordered region spans residues 1–43 (MGHSRRPAGGEKKSRGFGRSKAAADVGDGRQTGGKPQVKKATF). The 680-residue stretch at 51–730 (IGVSDLTLLS…TLFALEAMRD (680 aa)) folds into the Myosin motor domain. 144–151 (GESGAGKT) is a binding site for ATP. Serine 372 is modified (phosphoserine). An actin-binding region spans residues 419 to 501 (SIGILDIYGF…PGVFAALNDA (83 aa)). 2 IQ domains span residues 734–754 (HNMA…RTEC) and 755–780 (AIRI…QGHQ). The 191-residue stretch at 788–978 (RRRMSLLGSR…TIHTGPGEPA (191 aa)) folds into the TH1 domain. Disordered regions lie at residues 962–1079 (DDSY…PKKP) and 1126–1250 (WTPE…DDDW). Residues 1021–1035 (AAQPLPRATPQPAAP) are compositionally biased toward pro residues. The span at 1036–1051 (QPAARAVPQPVAAVAA) shows a compositional bias: low complexity. Composition is skewed to pro residues over residues 1064 to 1077 (APPP…PAPK) and 1139 to 1151 (TPKP…PPAA). One can recognise an SH3 domain in the interval 1076–1137 (PKKPTAKVLY…PEAYLEEQVA (62 aa)). The span at 1152–1170 (PRSTPAPATNGAAAAAKAK) shows a compositional bias: low complexity. A compositionally biased stretch (polar residues) spans 1201-1222 (VSMNSHDSSGGSGRGTPNSMSN). Residues 1223–1232 (ASLAGGLAEA) are compositionally biased toward low complexity.

This sequence belongs to the TRAFAC class myosin-kinesin ATPase superfamily. Myosin family. In terms of processing, phosphorylation of the TEDS site (Ser-372) is required for the polarization of the actin cytoskeleton. Phosphorylation probably activates the myosin-I ATPase activity.

It is found in the cytoplasm. The protein resides in the cytoskeleton. The protein localises to the actin patch. Its function is as follows. Type-I myosin implicated in the organization of the actin cytoskeleton. Required for proper actin cytoskeleton polarization. At the cell cortex, assembles in patch-like structures together with proteins from the actin-polymerizing machinery and promotes actin assembly. Functions as actin nucleation-promoting factor (NPF) for the Arp2/3 complex. Plays an important role in polarized growth, spore germination, hyphal morphogenesis, and septal wall formation. The chain is Myosin-1 (myoA) from Neosartorya fischeri (strain ATCC 1020 / DSM 3700 / CBS 544.65 / FGSC A1164 / JCM 1740 / NRRL 181 / WB 181) (Aspergillus fischerianus).